A 132-amino-acid chain; its full sequence is Fatty acid-binding protein, brain (132 aa).

Val2 carries the N-acetylvaline modification. Position 127-129 (127-129) interacts with a fatty acid; sequence RHY.

Belongs to the calycin superfamily. Fatty-acid binding protein (FABP) family.

It is found in the cytoplasm. In terms of biological role, FABPs are thought to play a role in the intracellular transport of long-chain fatty acids and their acyl-CoA esters. The protein is Fatty acid-binding protein, brain (FABP7) of Gallus gallus (Chicken).